Reading from the N-terminus, the 325-residue chain is RepFIB replication protein A (325 aa).

A disordered region spans residues 279–298 (APNDESKENPLPPSPAEKVS).

The protein belongs to the initiator RepB protein family.

Functionally, this protein is essential for plasmid replication; it is involved in copy control functions. In vitro, binds to the DNA repeat units, BCDD'D'', EFG and HIJ. The sequence is that of RepFIB replication protein A (repA) from Escherichia coli.